The sequence spans 323 residues: Ankyrin repeat and SOCS box protein 11 (323 aa).

ANK repeat units lie at residues 64 to 93 (ADRS…NVNL), 97 to 126 (NRVS…HVNA), 130 to 159 (HGAT…KAQL), 162 to 191 (YLAS…NIEQ), 195 to 224 (QLGT…SVDH), 227 to 256 (WLDT…NLNL), and 260 to 289 (QGKS…ALSQ). Residues 273–323 (SVRQALLLHEGPPALSQLCRLCVRKCLGRTCHHAIYALGLPESLEKFLLYQ) form the SOCS box domain.

It belongs to the ankyrin SOCS box (ASB) family. As to quaternary structure, substrate-recognition component of the ECS(ASB11) complex, composed of ASB11, CUL5, ELOB, ELOC and RNF7/RBX2.

The protein resides in the endoplasmic reticulum. The protein operates within protein modification; protein ubiquitination. Substrate-recognition component of a cullin-5-RING E3 ubiquitin-protein ligase complex (ECS complex, also named CRL5 complex), which mediates the ubiquitination and subsequent proteasomal degradation of target proteins, such as BIK, DIRAS2 and RPN1. The ECS(ASB11) complex acts as a regulator of the endoplasmic reticulum unfolded protein response by mediating ubiquitination and degradation of BIK. This is Ankyrin repeat and SOCS box protein 11 (Asb11) from Mus musculus (Mouse).